We begin with the raw amino-acid sequence, 237 residues long: Sulfolipid-1 exporter Sap (237 aa).

6 helical membrane-spanning segments follow: residues 5–25, 38–58, 66–86, 141–161, 171–191, and 217–237; these read VLVL…VVLM, FLCG…VVLG, FSVA…AFAL, VSGL…AAIL, ALAV…PLVS, and DAAL…LSNL.

It belongs to the peptidoglycolipid addressing protein (GAP) (TC 2.A.116) family.

The protein localises to the cell inner membrane. Its function is as follows. Required for the transport across the inner membrane of sulfolipid-1 (SL-1), which is a major cell wall lipid of pathogenic mycobacteria. Could also transport SL1278 (2-palmitoyl-3-(C43)-phthioceranyl-alpha, alpha'-D-trehalose-2'-sulfate), which is the precursor of SL-1. May potentiate SL-1 levels and confer specificity for sulfolipids over structurally similar glycolipids. In Mycobacterium tuberculosis (strain ATCC 25618 / H37Rv), this protein is Sulfolipid-1 exporter Sap.